The following is a 360-amino-acid chain: Phenylalanine--tRNA ligase alpha subunit (360 aa).

Glu260 is a binding site for Mg(2+).

Belongs to the class-II aminoacyl-tRNA synthetase family. Phe-tRNA synthetase alpha subunit type 1 subfamily. As to quaternary structure, tetramer of two alpha and two beta subunits. Mg(2+) serves as cofactor.

The protein resides in the cytoplasm. The catalysed reaction is tRNA(Phe) + L-phenylalanine + ATP = L-phenylalanyl-tRNA(Phe) + AMP + diphosphate + H(+). This Sinorhizobium fredii (strain NBRC 101917 / NGR234) protein is Phenylalanine--tRNA ligase alpha subunit.